The chain runs to 608 residues: Mitochondrial import receptor subunit TOM70 (608 aa).

Alanine 2 bears the N-acetylalanine mark. Residues 2–38 (AASKPVEAAVVAAAVPSSGSGVGGGGTAGPGTGGLPR) are Mitochondrial intermembrane-facing. Residues 39–59 (WQLALAVGAPLLLGAGAIYLW) traverse the membrane as a helical segment. Residues 60–608 (SRQQRRREAR…KKYGLKPPTL (549 aa)) are Cytoplasmic-facing. Residues 67-107 (EARGRGDASGLKRNSERKTPEGRASPAPGSGHPEGPGAHLD) form a disordered region. Arginine 71 bears the Omega-N-methylarginine mark. A phosphoserine mark is found at serine 91, serine 96, and serine 110. TPR repeat units lie at residues 114-147 (AQAA…CPTE) and 153-186 (STFY…NPKY). At lysine 185 the chain carries N6-acetyllysine. Residue lysine 275 forms a Glycyl lysine isopeptide (Lys-Gly) (interchain with G-Cter in SUMO2) linkage. TPR repeat units lie at residues 294 to 327 (ENSG…EGKY), 329 to 362 (AEAL…KEAN), 367 to 400 (ANAL…DPQN), 401 to 434 (ADVY…RPES), 440 to 475 (QKCF…FPRC), 476 to 509 (AEGY…EPDN), 511 to 544 (TTYV…DNKC), and 545 to 578 (DFAY…AKSE). A Phosphoserine modification is found at serine 434.

It belongs to the Tom70 family. As to quaternary structure, forms part of the preprotein translocase complex of the outer mitochondrial membrane (TOM complex) which consists of at least 7 different proteins (TOMM5, TOMM6, TOMM7, TOMM20, TOMM22, TOMM40 and TOMM70). Interacts with CAPN8. Interacts with TRADD, TRAF6 and STING. Interacts with MAVS; the interaction is enhanced by Sendai virus infection. Interacts with HSPA8 and HSP90AA1; both interactions are required for preprotein mitochondrial import. The interaction with HSP90AA1 is direct and mediates the association of TOMM70 with IRF3 and TBK1. Upon mitochondrial depolarization, interacts with PINK1; the interaction is required for PINK1-TOM-TIM23 supercomplex formation which is critical for PINK1 stabilization at the outer mitochondrial membrane, kinase activation and downstream mitophagy. (Microbial infection) Interacts (via C-terminus) with SARS coronaviru/SARS-CoV and SARS coronavirus-2/SARS-CoV-2 virus protein ORF9b. In terms of assembly, (Microbial infection) Interacts with parasite T.gondii RH strain MAF1b1; the interaction impairs TOMM70 import activity, enables the parasite to associate with the host mitochondria and facilitates the association of MAF1b1 with MIB complex component SAMM50, promoting the formation of SPOTs (structures positive for outer mitochondrial membrane (OMM)); the interaction is probably indirect.

The protein localises to the mitochondrion outer membrane. Its function is as follows. Acts as a receptor of the preprotein translocase complex of the outer mitochondrial membrane (TOM complex). Recognizes and mediates the translocation of mitochondrial preproteins from the cytosol into the mitochondria in a chaperone dependent manner. Mediates TBK1 and IRF3 activation induced by MAVS in response to Sendai virus infection and promotes host antiviral responses during virus infection. Upon Sendai virus infection, recruits HSP90AA1:IRF3:BAX in mitochondrion and the complex induces apoptosis. In Homo sapiens (Human), this protein is Mitochondrial import receptor subunit TOM70.